The sequence spans 423 residues: Imidazolonepropionase (423 aa).

Residues His-87 and His-89 each contribute to the Fe(3+) site. 2 residues coordinate Zn(2+): His-87 and His-89. 4-imidazolone-5-propanoate-binding residues include Arg-96, Tyr-159, and His-192. An N-formimidoyl-L-glutamate-binding site is contributed by Tyr-159. Residue His-257 participates in Fe(3+) binding. His-257 is a Zn(2+) binding site. Glu-260 is a 4-imidazolone-5-propanoate binding site. Asp-331 is a binding site for Fe(3+). Asp-331 lines the Zn(2+) pocket. 2 residues coordinate N-formimidoyl-L-glutamate: Asn-333 and Gly-335. Ser-336 lines the 4-imidazolone-5-propanoate pocket.

The protein belongs to the metallo-dependent hydrolases superfamily. HutI family. Zn(2+) serves as cofactor. It depends on Fe(3+) as a cofactor.

It is found in the cytoplasm. It catalyses the reaction 4-imidazolone-5-propanoate + H2O = N-formimidoyl-L-glutamate. Its pathway is amino-acid degradation; L-histidine degradation into L-glutamate; N-formimidoyl-L-glutamate from L-histidine: step 3/3. Catalyzes the hydrolytic cleavage of the carbon-nitrogen bond in imidazolone-5-propanoate to yield N-formimidoyl-L-glutamate. It is the third step in the universal histidine degradation pathway. In Porphyromonas gingivalis (strain ATCC 33277 / DSM 20709 / CIP 103683 / JCM 12257 / NCTC 11834 / 2561), this protein is Imidazolonepropionase.